The sequence spans 393 residues: Elongation factor Tu (393 aa).

Residues 10–203 form the tr-type G domain; the sequence is KPHVNIGTIG…AVDNYIPTPV (194 aa). The G1 stretch occupies residues 19 to 26; it reads GHVDHGKT. 19–26 is a binding site for GTP; that stretch reads GHVDHGKT. T26 provides a ligand contact to Mg(2+). Residues 60–64 are G2; the sequence is GITIS. A G3 region spans residues 81-84; the sequence is DCPG. Residues 81–85 and 136–139 contribute to the GTP site; these read DCPGH and NKVD. Residues 136–139 are G4; the sequence is NKVD. Residues 173 to 175 form a G5 region; the sequence is SAL.

It belongs to the TRAFAC class translation factor GTPase superfamily. Classic translation factor GTPase family. EF-Tu/EF-1A subfamily. As to quaternary structure, monomer.

Its subcellular location is the cytoplasm. It catalyses the reaction GTP + H2O = GDP + phosphate + H(+). Functionally, GTP hydrolase that promotes the GTP-dependent binding of aminoacyl-tRNA to the A-site of ribosomes during protein biosynthesis. In Chloroherpeton thalassium (strain ATCC 35110 / GB-78), this protein is Elongation factor Tu.